Consider the following 294-residue polypeptide: UPF0282 protein APE_0500.1 (294 aa).

Belongs to the UPF0282 family.

The protein is UPF0282 protein APE_0500.1 of Aeropyrum pernix (strain ATCC 700893 / DSM 11879 / JCM 9820 / NBRC 100138 / K1).